The sequence spans 340 residues: Guanine nucleotide-binding protein G(I)/G(S)/G(T) subunit beta-1 (340 aa).

WD repeat units follow at residues 53-83, 95-125, 141-170, 182-212, 224-254, 268-298, and 310-340; these read GHLAKIYAMHWGTDSRLLVSASQDGKLIIWD, LRSSWVMTCAYAPSGNYVACGGLDNICPIYN, GHTGYLSCCRFLDDNQIITSSGDTTCALWD, GHTGDVMSLSLAPDSRCFVSGACDASAKLWD, GHESDINAICFFPNGNAFATGSDDATCRLFD, NIICGITSVAFSKSGRLLLAGYDDFNCNVWD, and GHDNRVSCLGVTDDGMAVATGSWDSFLKIWN.

This sequence belongs to the WD repeat G protein beta family. As to quaternary structure, g proteins are composed of 3 units, alpha, beta and gamma.

In terms of biological role, guanine nucleotide-binding proteins (G proteins) are involved as a modulator or transducer in various transmembrane signaling systems. The beta and gamma chains are required for the GTPase activity, for replacement of GDP by GTP, and for G protein-effector interaction. This Xenopus laevis (African clawed frog) protein is Guanine nucleotide-binding protein G(I)/G(S)/G(T) subunit beta-1 (gnb1).